An 813-amino-acid chain; its full sequence is Homeobox-leucine zipper protein ROC4 (813 aa).

The segment at 62 to 112 (EVENEMSRSGSDHLDVVSCGDAGGGGGDDDDDEDAEHGNPPKRKKRYHRHT) is disordered. Basic residues predominate over residues 101–112 (PPKRKKRYHRHT). The segment at residues 104–163 (RKKRYHRHTPQQIQELEAMFKECPHPDEKQRAELSKRLGLEPRQVKFWFQNRRTQMKMQL) is a DNA-binding region (homeobox). A coiled-coil region spans residues 152-191 (FQNRRTQMKMQLERHENSLLKQENDKLRSENLSIREATSN). The START domain occupies 306 to 559 (AGIDKSLFLE…LQRQCECLAL (254 aa)).

This sequence belongs to the HD-ZIP homeobox family. Class IV subfamily.

It is found in the nucleus. Probable transcription factor. The sequence is that of Homeobox-leucine zipper protein ROC4 (ROC4) from Oryza sativa subsp. japonica (Rice).